The primary structure comprises 531 residues: MWIVLCAFLALPLFLVTYFELGLLRRKRMLNKFQGPSMLPLVGNAHQMGNTPTEILNRFFGWWHEYGKDNFRYWIGYYSNIMVTNPKYMEFILSSQTLISKSDVYDLTHPWLGLGLLTSTGSKWHKHRKMITPAFHFNILQDFHEVMNENSTKFIDQLKKVADGGNIFDFQEEAHYLTLDVICDTAMGVSINAMENRSSSVVQAFKDITYTIKMRAFSPWKRNKYLFHFAPEYPEYSKTLKTLQDFTNEIIAKRIEVRKSGLEVGIKADEFSRKKMAFLDTLLSSKVDGRPLTSQELYEEVSTFMFEGHDTTTSGVGFAVYLLSRHPDEQEKLFNEQCDVMGASGLGRDATFQEISTMKHLDLFIKEAQRLYPSVPFIGRFTEKDYVIDGDIVPKGTTLNLGLLMLGYNDRVFKDPHKFQPERFDREKPGPFEYVPFSAGPRNCIGQKFALLEIKTVVSKIIRNFEVLPALDELVSKDGYISTTLGLQPAEKKSRDAHNHKYDPILSASMTLKSENGLHLRMKQRLVCDST.

The heme site is built by E307 and C444.

Belongs to the cytochrome P450 family. Heme is required as a cofactor.

It localises to the endoplasmic reticulum membrane. It is found in the microsome membrane. Its function is as follows. May be involved in the metabolism of insect hormones and in the breakdown of synthetic insecticides. In Drosophila melanogaster (Fruit fly), this protein is Probable cytochrome P450 4e1 (Cyp4e1).